A 207-amino-acid chain; its full sequence is Cytochrome c oxidase subunit 3 (207 aa).

Transmembrane regions (helical) follow at residues 30–50 (FWLFLGGETVLFASLFATFLA), 67–87 (VTLVFIATMLLLTSSLTSVYA), 101–121 (LWLGITILLGAGFLGLEIYEF), 144–164 (LVGTHGAHVAFGLMWISTLMI), and 186–206 (WHFIDVVWVFIFTVVYLMGMV).

The protein belongs to the cytochrome c oxidase subunit 3 family.

It localises to the cell membrane. It catalyses the reaction 4 Fe(II)-[cytochrome c] + O2 + 8 H(+)(in) = 4 Fe(III)-[cytochrome c] + 2 H2O + 4 H(+)(out). This chain is Cytochrome c oxidase subunit 3 (ctaE), found in Bacillus subtilis (strain 168).